The sequence spans 218 residues: Adenylate kinase (218 aa).

12–17 (GAGKGT) provides a ligand contact to ATP. The tract at residues 32 to 61 (STGDMLREARSSGTEMGKRVAEVMDRGELV) is NMP. Residues Thr-33, Arg-38, 59–61 (ELV), 85–88 (GFPR), and Gln-92 each bind AMP. Residues 126–164 (GRFTCGNCGEVYHDVTKPTKEPGKCDVCGSTDLRRRADD) form an LID region. Arg-127 serves as a coordination point for ATP. The Zn(2+) site is built by Cys-130 and Cys-133. 136-137 (VY) contacts ATP. Zn(2+) is bound by residues Cys-150 and Cys-153. AMP is bound by residues Arg-161 and Arg-172. Residue Ala-200 coordinates ATP.

Belongs to the adenylate kinase family. As to quaternary structure, monomer.

Its subcellular location is the cytoplasm. The enzyme catalyses AMP + ATP = 2 ADP. It participates in purine metabolism; AMP biosynthesis via salvage pathway; AMP from ADP: step 1/1. Its function is as follows. Catalyzes the reversible transfer of the terminal phosphate group between ATP and AMP. Plays an important role in cellular energy homeostasis and in adenine nucleotide metabolism. The chain is Adenylate kinase from Paracoccus denitrificans (strain Pd 1222).